Consider the following 798-residue polypeptide: Putative antiporter subunit mnhA2 (798 aa).

21 consecutive transmembrane segments (helical) span residues 1-21 (MSLVYLLSTLILIMVILLFTL), 33-53 (IALLAPIVASVYFLYQLPSVM), 78-98 (GLSLFFSLLISLIGLAVVYYA), 109-129 (LPRFYVYLLLFMFSMLGIVTA), 133-153 (ILMYVFWELTSVSSFLLIVYW), 167-187 (FMITVFGGLALLAGFIMIYIV), 209-229 (FIPIIILLLLGAFTKSAQFPF), 241-261 (TPVSAYLHSATMVKAGIFLLF), 272-292 (FYIYSVTFVGLITMIFGAVNA), 300-320 (AILAYSTISQLGMIVSMVGLG), 337-357 (MILFAALFHLMNHALYKGALF), 381-401 (VFPITHIVMLLSALSMAGIPF), 431-451 (IITVIGVIASIFTLVYGVYMI), 472-492 (PFLFTLPSAIMMILLPVIFFI), 526-546 (GFNLPLILSLIVIVVGFIMAL), 593-613 (ITITLLIFSMVVIYGMIQAGF), 625-645 (GPIEVITLIVVFVLGIALTFI), 649-669 (LTMVVLNGIIGYCVTIFFILM), 674-694 (LALTQLVVETITTILFIVSFS), 710-730 (AVKIIVSLLMAVIVVTLVFIA), and 766-786 (IDTLFEGMVLIIAGLGIYTLL).

This sequence belongs to the CPA3 antiporters (TC 2.A.63) subunit A family. May form a heterooligomeric complex that consists of seven subunits: mnhA2, mnhB2, mnhC2, mnhD2, mnhE2, mnhF2 and mnhG2.

The protein resides in the cell membrane. This Staphylococcus saprophyticus subsp. saprophyticus (strain ATCC 15305 / DSM 20229 / NCIMB 8711 / NCTC 7292 / S-41) protein is Putative antiporter subunit mnhA2 (mnhA2).